A 344-amino-acid polypeptide reads, in one-letter code: tRNA (guanine(26)-N(2))-dimethyltransferase (344 aa).

Residues M1–M334 form the Trm1 methyltransferase domain. Residues R35, R60, and E76 each coordinate S-adenosyl-L-methionine.

This sequence belongs to the class I-like SAM-binding methyltransferase superfamily. Trm1 family.

It carries out the reaction guanosine(26) in tRNA + 2 S-adenosyl-L-methionine = N(2)-dimethylguanosine(26) in tRNA + 2 S-adenosyl-L-homocysteine + 2 H(+). Functionally, dimethylates a single guanine residue at position 26 of a number of tRNAs using S-adenosyl-L-methionine as donor of the methyl groups. This Thermoplasma acidophilum (strain ATCC 25905 / DSM 1728 / JCM 9062 / NBRC 15155 / AMRC-C165) protein is tRNA (guanine(26)-N(2))-dimethyltransferase.